A 631-amino-acid chain; its full sequence is Pescadillo homolog (631 aa).

The BRCT domain maps to Arg-321–Leu-414. The span at Ser-428–His-442 shows a compositional bias: basic and acidic residues. 2 disordered regions span residues Ser-428–Gln-471 and Tyr-489–Glu-560. Phosphoserine occurs at positions 453 and 457. 2 stretches are compositionally biased toward acidic residues: residues Ser-453 to Gln-471 and Val-498 to Asp-525. Over residues Glu-526 to Met-538 the composition is skewed to basic and acidic residues. Positions Lys-544–Val-553 are enriched in basic residues. Residues Leu-593–Leu-629 adopt a coiled-coil conformation.

The protein belongs to the pescadillo family.

It is found in the nucleus. The protein resides in the nucleolus. It localises to the nucleoplasm. Its function is as follows. Required for maturation of ribosomal RNAs and formation of the large ribosomal subunit. The chain is Pescadillo homolog from Drosophila persimilis (Fruit fly).